The chain runs to 309 residues: D-alanine--D-alanine ligase (309 aa).

The ATP-grasp domain occupies 109 to 304 (KMVWAACGLP…FTALCLAILE (196 aa)). ATP is bound at residue 135–190 (VAELGLPIFVKPVHEGSSMGATKVTAASQLKAAWERAARFDDLVLAEEFIVGAELT). Residues D258, E271, and N273 each contribute to the Mg(2+) site.

This sequence belongs to the D-alanine--D-alanine ligase family. It depends on Mg(2+) as a cofactor. Requires Mn(2+) as cofactor.

It is found in the cytoplasm. It carries out the reaction 2 D-alanine + ATP = D-alanyl-D-alanine + ADP + phosphate + H(+). It functions in the pathway cell wall biogenesis; peptidoglycan biosynthesis. Cell wall formation. In Aromatoleum aromaticum (strain DSM 19018 / LMG 30748 / EbN1) (Azoarcus sp. (strain EbN1)), this protein is D-alanine--D-alanine ligase.